The primary structure comprises 156 residues: Small ribosomal subunit protein uS7 (156 aa).

Belongs to the universal ribosomal protein uS7 family. In terms of assembly, part of the 30S ribosomal subunit. Contacts proteins S9 and S11.

One of the primary rRNA binding proteins, it binds directly to 16S rRNA where it nucleates assembly of the head domain of the 30S subunit. Is located at the subunit interface close to the decoding center, probably blocks exit of the E-site tRNA. In Carsonella ruddii (strain PV), this protein is Small ribosomal subunit protein uS7.